The chain runs to 320 residues: Cytochrome f (320 aa).

The signal sequence occupies residues M1–A35. The heme site is built by Y36, C56, C59, and H60. A helical membrane pass occupies residues I286–K306.

The protein belongs to the cytochrome f family. The 4 large subunits of the cytochrome b6-f complex are cytochrome b6, subunit IV (17 kDa polypeptide, petD), cytochrome f and the Rieske protein, while the 4 small subunits are PetG, PetL, PetM and PetN. The complex functions as a dimer. Heme serves as cofactor.

The protein localises to the plastid. It is found in the chloroplast thylakoid membrane. Functionally, component of the cytochrome b6-f complex, which mediates electron transfer between photosystem II (PSII) and photosystem I (PSI), cyclic electron flow around PSI, and state transitions. This is Cytochrome f from Dioscorea elephantipes (Elephant's foot yam).